Consider the following 443-residue polypeptide: ATP-dependent protease ATPase subunit HslU (443 aa).

Residues I18, 60–65, D256, E321, and R393 contribute to the ATP site; that span reads GVGKTE.

It belongs to the ClpX chaperone family. HslU subfamily. In terms of assembly, a double ring-shaped homohexamer of HslV is capped on each side by a ring-shaped HslU homohexamer. The assembly of the HslU/HslV complex is dependent on binding of ATP.

It localises to the cytoplasm. In terms of biological role, ATPase subunit of a proteasome-like degradation complex; this subunit has chaperone activity. The binding of ATP and its subsequent hydrolysis by HslU are essential for unfolding of protein substrates subsequently hydrolyzed by HslV. HslU recognizes the N-terminal part of its protein substrates and unfolds these before they are guided to HslV for hydrolysis. The polypeptide is ATP-dependent protease ATPase subunit HslU (Pectobacterium atrosepticum (strain SCRI 1043 / ATCC BAA-672) (Erwinia carotovora subsp. atroseptica)).